The sequence spans 559 residues: Protein GRAVITROPIC IN THE LIGHT 1 (559 aa).

Positions 107 to 127 (AVNRREEYDTEEEENEEEGEI) are disordered. A compositionally biased stretch (acidic residues) spans 114 to 127 (YDTEEEENEEEGEI).

Required for red (R) and far red (FR) light-induced and phytochrome-mediated deregulation of negative gravitropism leading to randomization of hypocotyl growth orientation. The chain is Protein GRAVITROPIC IN THE LIGHT 1 from Arabidopsis thaliana (Mouse-ear cress).